The sequence spans 221 residues: Probable chemoreceptor glutamine deamidase CheD 1 (221 aa).

It belongs to the CheD family.

It carries out the reaction L-glutaminyl-[protein] + H2O = L-glutamyl-[protein] + NH4(+). In terms of biological role, probably deamidates glutamine residues to glutamate on methyl-accepting chemotaxis receptors (MCPs), playing an important role in chemotaxis. This chain is Probable chemoreceptor glutamine deamidase CheD 1, found in Methanosarcina mazei (strain ATCC BAA-159 / DSM 3647 / Goe1 / Go1 / JCM 11833 / OCM 88) (Methanosarcina frisia).